The chain runs to 357 residues: Probable protein phosphatase 2C 60 (357 aa).

The region spanning 23–329 (RYGLSSMQGW…DNMTMILVRF (307 aa)) is the PPM-type phosphatase domain. Mn(2+) is bound by residues Asp-57, Gly-58, Asp-272, and Asp-320. The segment at 331–357 (NPTPSETELKPEASQAEGNHDEPSSSN) is disordered. The span at 348–357 (GNHDEPSSSN) shows a compositional bias: basic and acidic residues.

It belongs to the PP2C family. The cofactor is Mg(2+). It depends on Mn(2+) as a cofactor.

The catalysed reaction is O-phospho-L-seryl-[protein] + H2O = L-seryl-[protein] + phosphate. It catalyses the reaction O-phospho-L-threonyl-[protein] + H2O = L-threonyl-[protein] + phosphate. The protein is Probable protein phosphatase 2C 60 of Arabidopsis thaliana (Mouse-ear cress).